The following is a 105-amino-acid chain: Nitrogenase-stabilizing/protective protein NifW (105 aa).

This sequence belongs to the NifW family. In terms of assembly, homotrimer; associates with NifD.

Its function is as follows. May protect the nitrogenase Fe-Mo protein from oxidative damage. This chain is Nitrogenase-stabilizing/protective protein NifW, found in Rhodospirillum centenum (strain ATCC 51521 / SW).